Reading from the N-terminus, the 593-residue chain is Aspartate--tRNA(Asp/Asn) ligase (593 aa).

Glutamate 172 contributes to the L-aspartate binding site. Residues 196-199 (QLFK) form an aspartate region. Arginine 218 serves as a coordination point for L-aspartate. ATP is bound by residues 218 to 220 (RDE) and glutamine 227. Residue histidine 450 participates in L-aspartate binding. ATP is bound at residue glutamate 484. Arginine 491 is an L-aspartate binding site. 536-539 (GLDR) is an ATP binding site.

It belongs to the class-II aminoacyl-tRNA synthetase family. Type 1 subfamily. Homodimer.

The protein localises to the cytoplasm. The catalysed reaction is tRNA(Asx) + L-aspartate + ATP = L-aspartyl-tRNA(Asx) + AMP + diphosphate. Aspartyl-tRNA synthetase with relaxed tRNA specificity since it is able to aspartylate not only its cognate tRNA(Asp) but also tRNA(Asn). Reaction proceeds in two steps: L-aspartate is first activated by ATP to form Asp-AMP and then transferred to the acceptor end of tRNA(Asp/Asn). The protein is Aspartate--tRNA(Asp/Asn) ligase of Nitrosomonas eutropha (strain DSM 101675 / C91 / Nm57).